A 37-amino-acid chain; its full sequence is Large ribosomal subunit protein bL36c (37 aa).

This sequence belongs to the bacterial ribosomal protein bL36 family.

It is found in the plastid. The protein resides in the chloroplast. This Phaseolus angularis (Azuki bean) protein is Large ribosomal subunit protein bL36c.